We begin with the raw amino-acid sequence, 581 residues long: MGFFDLSIPYNEPPRSGGKEIAGGKTLRLKLATKAMELGYVGIAHNRSIKGVMSDKDSCTIPLLTLGSLIKVAPRLASSVGFHRDLLGVPRTTPFRQYTRLTVHVESNAQCQSLNSGNPILKSYDIIAVRPMNQNAFDYACEKAEVDLISIDFTDKMLFRLKHPMVKAAIQRGIYFEIKYSDILMDAQTRRQVISNAKLLVDWTRGKNLIISSGAPSVTELRGPNDVINLMFLLGLSAERARAAISKNCRNMIAKVLKKKRFHKEAVRVELLSAGDTFSLEQPLSEDCMKWDRLSSGEGDMLLDDLAKAFDATNVVAHKSSKAIDFTSVLDGLPKHGFRVKDIVGTESVTQPSAAKVIDTQVHSSNQVSELRMATASSDDNLREIETISQIDMLMSEDDNKVEPTTNVLKEEAFALRKCSASHGQGILVQNQTATPFTLTRCTKSEAASDVSMNIESTSEGGSMSPSKSDHGIPQSPVEVNNMGNAAFEEEASVDENSKERATTGHASNDEMHITESGHHASIDDEKHIPEPEHLTSIADEMKIDCSSEANHDEYMEVTMEDQMHETVQMRLCKTMTKHQD.

Residues 452 to 467 (SMNIESTSEGGSMSPS) are compositionally biased toward polar residues. The interval 452–512 (SMNIESTSEG…TTGHASNDEM (61 aa)) is disordered. Basic and acidic residues predominate over residues 496 to 512 (ENSKERATTGHASNDEM).

It belongs to the eukaryotic/archaeal RNase P protein component 3 family. As to quaternary structure, probable component of nuclear RNase P and RNase MRP ribonucleoproteins. Interacts with POP5. Mostly expressed in inflorescence and roots, to a lower extent in leaves, and, at low levels, in siliques, seedlings and stems.

Its subcellular location is the nucleus. The protein localises to the nucleolus. It localises to the mitochondrion. Its function is as follows. Probable component of ribonuclease P, a ribonucleoprotein complex that generates mature tRNA molecules by cleaving their 5'-ends. May also be a component of the MRP ribonuclease complex, which cleaves pre-rRNA sequences. Required for female gametophyte development and male competence. In Arabidopsis thaliana (Mouse-ear cress), this protein is Protein GAMETOPHYTE DEFECTIVE 1.